Here is a 220-residue protein sequence, read N- to C-terminus: Deoxyribose-phosphate aldolase (220 aa).

Residue Asp-89 is the Proton donor/acceptor of the active site. The active-site Schiff-base intermediate with acetaldehyde is the Lys-151. Lys-180 (proton donor/acceptor) is an active-site residue.

The protein belongs to the DeoC/FbaB aldolase family. DeoC type 1 subfamily.

The protein resides in the cytoplasm. The catalysed reaction is 2-deoxy-D-ribose 5-phosphate = D-glyceraldehyde 3-phosphate + acetaldehyde. It functions in the pathway carbohydrate degradation; 2-deoxy-D-ribose 1-phosphate degradation; D-glyceraldehyde 3-phosphate and acetaldehyde from 2-deoxy-alpha-D-ribose 1-phosphate: step 2/2. Catalyzes a reversible aldol reaction between acetaldehyde and D-glyceraldehyde 3-phosphate to generate 2-deoxy-D-ribose 5-phosphate. The chain is Deoxyribose-phosphate aldolase from Streptococcus uberis (strain ATCC BAA-854 / 0140J).